The sequence spans 254 residues: Type III pantothenate kinase (254 aa).

6–13 (DVGNSNIV) contributes to the ATP binding site. Substrate-binding positions include Tyr-100 and 107–110 (GADR). Residue Asp-109 is the Proton acceptor of the active site. Residue Asp-129 coordinates K(+). Residue Thr-132 coordinates ATP. Thr-184 is a substrate binding site.

The protein belongs to the type III pantothenate kinase family. As to quaternary structure, homodimer. The cofactor is NH4(+). Requires K(+) as cofactor.

It is found in the cytoplasm. It catalyses the reaction (R)-pantothenate + ATP = (R)-4'-phosphopantothenate + ADP + H(+). Its pathway is cofactor biosynthesis; coenzyme A biosynthesis; CoA from (R)-pantothenate: step 1/5. Its function is as follows. Catalyzes the phosphorylation of pantothenate (Pan), the first step in CoA biosynthesis. This Citrifermentans bemidjiense (strain ATCC BAA-1014 / DSM 16622 / JCM 12645 / Bem) (Geobacter bemidjiensis) protein is Type III pantothenate kinase.